The sequence spans 290 residues: Glutaredoxin domain-containing cysteine-rich protein 1 (290 aa).

The Glutaredoxin domain occupies 127 to 234 (LQQPSTDLEF…DILTKIERVQ (108 aa)).

The protein belongs to the GRXCR1 family. In terms of tissue distribution, expressed at low levels in adult lung, brain and duodenum with moderate levels in testis. Highly expressed in fetal cochlea.

It localises to the cell projection. The protein localises to the stereocilium. It is found in the microvillus. Its subcellular location is the kinocilium. In terms of biological role, may play a role in actin filament architecture in developing stereocilia of sensory cells. This Homo sapiens (Human) protein is Glutaredoxin domain-containing cysteine-rich protein 1 (GRXCR1).